The following is a 297-amino-acid chain: HTH-type transcriptional regulator ArgP (297 aa).

An HTH lysR-type domain is found at 4 to 60; that stretch reads PDYRTLQALDAVIRERGFERAAQKLCITQSAVSQRIKQLENLFGQPLLVRTIPPRPT. The H-T-H motif DNA-binding region spans 21–40; that stretch reads FERAAQKLCITQSAVSQRIK.

Belongs to the LysR transcriptional regulatory family. Homodimer.

Functionally, controls the transcription of genes involved in arginine and lysine metabolism. The chain is HTH-type transcriptional regulator ArgP from Pectobacterium atrosepticum (strain SCRI 1043 / ATCC BAA-672) (Erwinia carotovora subsp. atroseptica).